Here is a 459-residue protein sequence, read N- to C-terminus: AGFKAGVKDYKLTYYTPDYETKDTDILAAFRVTPQPGVPPEEAGAAVAAESSTGTWTTVWTDGLTSLDRYKGRCYHIETVVGEENQYIAYVAYPLDLFEEGSVTNMFTSIVGNVFGFKALRALRLEDLRIPPSYSKTFQGPPHGIQVERDKLNKYGRPLLGCTIKPKLGLSAKNYGRAVYECLRGGLDFTKDDENVNSQPFMRWRDRFLFCTEAIYKAQTETGEIKGHYLNATAGTCEEMMKRAIFARELGVPIIMHDYLTGGFTANTSLAHYCRDNGLLLHIHRAMHAVIDRQKNHGMHFRVLAKALRMSGGDHIHGGTVVGKLEGEREMTLGFVDLLRDDFIEKDRSRGIFFTQDWVSMPGVIPVASGGIHVWHMPALTEIFGDDSVLQFGGGTLGHPWGNAPGAVANRVALEACVQARNEGRDLAREGNEIIREASKWSPELAAACEVWKEIKFDF.

Lysine 4 carries the post-translational modification N6,N6,N6-trimethyllysine. Substrate-binding residues include asparagine 113 and threonine 163. The active-site Proton acceptor is the lysine 165. Substrate is bound at residue lysine 167. Lysine 191, aspartate 193, and glutamate 194 together coordinate Mg(2+). Residue lysine 191 is modified to N6-carboxylysine. Histidine 284 serves as the catalytic Proton acceptor. Substrate contacts are provided by arginine 285, histidine 317, and serine 369.

It belongs to the RuBisCO large chain family. Type I subfamily. In terms of assembly, heterohexadecamer of 8 large chains and 8 small chains; disulfide-linked. The disulfide link is formed within the large subunit homodimers. Mg(2+) is required as a cofactor. The disulfide bond which can form in the large chain dimeric partners within the hexadecamer appears to be associated with oxidative stress and protein turnover.

It localises to the plastid. Its subcellular location is the chloroplast. It catalyses the reaction 2 (2R)-3-phosphoglycerate + 2 H(+) = D-ribulose 1,5-bisphosphate + CO2 + H2O. The catalysed reaction is D-ribulose 1,5-bisphosphate + O2 = 2-phosphoglycolate + (2R)-3-phosphoglycerate + 2 H(+). In terms of biological role, ruBisCO catalyzes two reactions: the carboxylation of D-ribulose 1,5-bisphosphate, the primary event in carbon dioxide fixation, as well as the oxidative fragmentation of the pentose substrate in the photorespiration process. Both reactions occur simultaneously and in competition at the same active site. The protein is Ribulose bisphosphate carboxylase large chain of Nypa fruticans (Nypa palm).